The following is a 423-amino-acid chain: uncharacterized protein (423 aa).

The BON domain occupies 75 to 145; that stretch reads LHVVVTQPIA…PIVNNIKVAG (71 aa).

Belongs to the bacterial secretin family.

Its function is as follows. Involved in the secretion of an unknown compound. This is an uncharacterized protein from Sinorhizobium fredii (strain NBRC 101917 / NGR234).